Consider the following 382-residue polypeptide: Dual-specificity RNA methyltransferase RlmN (382 aa).

Glutamate 96 acts as the Proton acceptor in catalysis. Residues 102 to 342 enclose the Radical SAM core domain; the sequence is QGKRGTLCVS…VRTTRGEDID (241 aa). The cysteines at positions 109 and 345 are disulfide-linked. Residues cysteine 116, cysteine 120, and cysteine 123 each coordinate [4Fe-4S] cluster. Residues 170 to 171, serine 202, 224 to 226, and asparagine 302 each bind S-adenosyl-L-methionine; these read GE and SLH. Cysteine 345 serves as the catalytic S-methylcysteine intermediate.

This sequence belongs to the radical SAM superfamily. RlmN family. [4Fe-4S] cluster is required as a cofactor.

It localises to the cytoplasm. The catalysed reaction is adenosine(2503) in 23S rRNA + 2 reduced [2Fe-2S]-[ferredoxin] + 2 S-adenosyl-L-methionine = 2-methyladenosine(2503) in 23S rRNA + 5'-deoxyadenosine + L-methionine + 2 oxidized [2Fe-2S]-[ferredoxin] + S-adenosyl-L-homocysteine. It carries out the reaction adenosine(37) in tRNA + 2 reduced [2Fe-2S]-[ferredoxin] + 2 S-adenosyl-L-methionine = 2-methyladenosine(37) in tRNA + 5'-deoxyadenosine + L-methionine + 2 oxidized [2Fe-2S]-[ferredoxin] + S-adenosyl-L-homocysteine. Its function is as follows. Specifically methylates position 2 of adenine 2503 in 23S rRNA and position 2 of adenine 37 in tRNAs. m2A2503 modification seems to play a crucial role in the proofreading step occurring at the peptidyl transferase center and thus would serve to optimize ribosomal fidelity. The polypeptide is Dual-specificity RNA methyltransferase RlmN (Pseudomonas fluorescens (strain ATCC BAA-477 / NRRL B-23932 / Pf-5)).